Consider the following 148-residue polypeptide: Deoxyuridine 5'-triphosphate nucleotidohydrolase (148 aa).

Substrate contacts are provided by residues 68–70, asparagine 81, 85–87, and lysine 95; these read RSG and TID.

Belongs to the dUTPase family. Mg(2+) serves as cofactor.

It catalyses the reaction dUTP + H2O = dUMP + diphosphate + H(+). It participates in pyrimidine metabolism; dUMP biosynthesis; dUMP from dCTP (dUTP route): step 2/2. Functionally, this enzyme is involved in nucleotide metabolism: it produces dUMP, the immediate precursor of thymidine nucleotides and it decreases the intracellular concentration of dUTP so that uracil cannot be incorporated into DNA. The sequence is that of Deoxyuridine 5'-triphosphate nucleotidohydrolase from Thermoanaerobacter sp. (strain X514).